We begin with the raw amino-acid sequence, 177 residues long: MINITKPQNWTRGDYLVSTDPALLQVDAINAALSSDMVWWAGDLPADALWDALRSSICFGLYRKRSSEMNGTGPTVEYKIEEWEQVGLVRMITDGVTFGYLTDVYILPEHQGGGRGRWMLQILNEALQGWPHLRRVMLLTTDKMHLFGKNLGMKDYREFDGMKGVSIAMVEGPGAQH.

The N-acetyltransferase domain maps to 81–174; sequence EEWEQVGLVR…VSIAMVEGPG (94 aa).

This sequence belongs to the acetyltransferase family.

The protein operates within mycotoxin biosynthesis. In terms of biological role, putative acetyltransferase; part of the gene cluster that mediates the biosynthesis of butenolide, a mycotoxin that shows antibiotic activity but does not seem to play a major role in the spread of head blight in wheat. Butenolide is derived from glutamic acid via a 4-acetamido-2-butenoic acid intermediate. The predicted function of the NADH:flavin oxidoreductase FG08077, the cytochrome P450 monooxygenase FG08079, the decarboxylase FG08083, and the putative acetyltransferase FG08082 are consistent with this pathway, however, the respective activities of the butelonide biosynthesis cluster enzymes have still to be experimentally determined. This chain is Putative acetyltransferase FG08082, found in Gibberella zeae (strain ATCC MYA-4620 / CBS 123657 / FGSC 9075 / NRRL 31084 / PH-1) (Wheat head blight fungus).